A 127-amino-acid polypeptide reads, in one-letter code: Major sperm protein 55/57 (127 aa).

Ala2 is subject to N-acetylalanine. Positions 9–126 constitute an MSP domain; the sequence is DIQTQPGTKI…RRKNLPIEYN (118 aa).

Sperm.

The protein resides in the cell projection. The protein localises to the pseudopodium. Its subcellular location is the cytoplasm. It is found in the cytoskeleton. Functionally, central component in molecular interactions underlying sperm crawling. Forms an extensive filament system that extends from sperm villipoda, along the leading edge of the pseudopod. This is Major sperm protein 55/57 (msp-55) from Caenorhabditis elegans.